The following is an 838-amino-acid chain: Ribonucleoside-diphosphate reductase large subunit (838 aa).

The ATP-cone domain occupies 6 to 97; that stretch reads KLVTKRDGSV…VTALHKTTTE (92 aa). Residues 10 to 11, 16 to 22, Thr-58, and Asp-62 each bind ATP; these read KR and EPYDEKV. Ser-227 contributes to the GDP binding site. Cys-228 and Cys-454 form a disulfide bridge. Residues 236-238, Lys-253, Arg-266, and 273-274 contribute to the dTTP site; these read DSI and AG. Residue Asn-437 participates in GDP binding. The Proton acceptor role is filled by Asn-437. Residue Cys-439 is the Cysteine radical intermediate of the active site. GDP contacts are provided by residues Glu-441 and 626–629; that span reads TAST. Glu-441 functions as the Proton acceptor in the catalytic mechanism. Over residues 780 to 794 the composition is skewed to basic and acidic residues; that stretch reads KELPKPDKQSKEEVH. The interval 780-838 is disordered; it reads KELPKPDKQSKEEVHGSVGRGKRKRVGEKPTANHSNAGAPNLNGPPDTDGDGGCLNCGS.

This sequence belongs to the ribonucleoside diphosphate reductase large chain family. In terms of assembly, heterodimer of a large and a small subunit.

The enzyme catalyses a 2'-deoxyribonucleoside 5'-diphosphate + [thioredoxin]-disulfide + H2O = a ribonucleoside 5'-diphosphate + [thioredoxin]-dithiol. It catalyses the reaction dCDP + [thioredoxin]-disulfide + H2O = CDP + [thioredoxin]-dithiol. Under complex allosteric control mediated by deoxynucleoside triphosphates and ATP binding to separate specificity and activation sites on the large subunit. The type of nucleotide bound at the specificity site determines substrate preference. It seems probable that ATP makes the enzyme reduce CDP and UDP, dGTP favors ADP reduction and dTTP favors GDP reduction. Stimulated by ATP and inhibited by dATP binding to the activity site. Provides the precursors necessary for DNA synthesis. Catalyzes the rate limiting step in the de novo synthesis of deoxyribonucleotides by directly reducing ribonucleotides to the corresponding deoxyribonucleotides. This Trypanosoma brucei brucei protein is Ribonucleoside-diphosphate reductase large subunit (RNR1).